The chain runs to 670 residues: MSESVLQRLEELKESLHYHAVRYYVEDNPEIPDAEYDRMMRELLDIEAEHPELVTVDSPSLRVGGQPLSEFSQVTHEVPMLSLDNAFDDAELDGFHKRAQDRVVGHTIKQYCCEPKLDGLAVSLLYENGVLVQAATRGDGTTGENITENVRTISAIPLKLQGKGWPTRLEVRGEVFMPKAGFDKLNENARKKGEKVFVNPRNAAAGSLRQLDSRITASRPLSFYAYSVGVVEGATLANSHYERFLQIKSWGLPMCPETKRVDSLEEVKAYYQDILTRREALAYEIDGVVIKVDDIAIQERLGFVARAPRWAIAYKFPAQEEITTLNEVEFQVGRTGAITPVAKLEPIFVGGVTVSNATLHNADEIERLQVMVGDQVVIRRAGDVIPQVVSVIKERRPETAREILFPDACPVCGSHVERIEGEAVTRCTGGLVCQAQRKEALKHFVSRKALDVDGLGDKVIEQLVDREMVETPADLFKLSAGVLTVLERMGPKSATNVVNALEKSKLTTLPRFLYSLGIREVGEATAANLAQYFKNLDAIQQATEEQLIEVQDIGVIVAKHITTFFGEEKNQAVVQDLLAQGINWPEIAAPQEGVELPLEGKTVVLTGTLSQLGRSEAKEALQNLGAKVTGSVSKKTDILFAGENAGSKLAKAQELGIEIQTEQDLLNLMK.

NAD(+) is bound by residues 33-37 (DAEYD), 82-83 (SL), and Glu-114. Residue Lys-116 is the N6-AMP-lysine intermediate of the active site. Residues Arg-137, Glu-174, Lys-291, and Lys-315 each contribute to the NAD(+) site. Zn(2+)-binding residues include Cys-409, Cys-412, Cys-427, and Cys-433. The 78-residue stretch at 593-670 (GVELPLEGKT…TEQDLLNLMK (78 aa)) folds into the BRCT domain.

Belongs to the NAD-dependent DNA ligase family. LigA subfamily. Mg(2+) is required as a cofactor. Mn(2+) serves as cofactor.

It catalyses the reaction NAD(+) + (deoxyribonucleotide)n-3'-hydroxyl + 5'-phospho-(deoxyribonucleotide)m = (deoxyribonucleotide)n+m + AMP + beta-nicotinamide D-nucleotide.. DNA ligase that catalyzes the formation of phosphodiester linkages between 5'-phosphoryl and 3'-hydroxyl groups in double-stranded DNA using NAD as a coenzyme and as the energy source for the reaction. It is essential for DNA replication and repair of damaged DNA. The chain is DNA ligase from Vibrio campbellii (strain ATCC BAA-1116).